The chain runs to 558 residues: Germacrene A synthase short form (558 aa).

The Mg(2+) site is built by Asp-311, Asp-315, Asp-455, Thr-459, and Glu-463. The DDXXD motif signature appears at 311–315; it reads DDTYD.

Belongs to the terpene synthase family. It depends on Mg(2+) as a cofactor. In terms of tissue distribution, expressed in roots and in green and etiolated seedlings.

It carries out the reaction (2E,6E)-farnesyl diphosphate = (+)-(R)-germacrene A + diphosphate. It functions in the pathway secondary metabolite biosynthesis; terpenoid biosynthesis. Functionally, involved in sesquiterpene lactone biosynthesis. Produces exclusively (+)-germacrene A. The chain is Germacrene A synthase short form from Cichorium intybus (Chicory).